Here is a 417-residue protein sequence, read N- to C-terminus: Hydrogen cyanide synthase subunit HcnC (417 aa).

The signal sequence occupies residues 1–18 (MIKHYDVVIAGGGVIGAS). 7–21 (VVIAGGGVIGASCAY) is an FAD binding site. Cys19 carries the N-palmitoyl cysteine lipid modification. Cys19 carries S-diacylglycerol cysteine lipidation. Residues 46 to 66 (SAGGLWAIGESVGLGCGVIFF) form a helical membrane-spanning segment.

This sequence belongs to the FAD-dependent glycerol-3-phosphate dehydrogenase family. Heterotrimer of HcnA, HcnB and HcnC.

The protein localises to the cell membrane. The enzyme catalyses glycine + 2 A = hydrogen cyanide + 2 AH2 + CO2. Its function is as follows. A three-component membrane-bound flavoenzyme that catalyzes the formation of hydrogen cyanide, a secondary metabolite, by transfer of electrons to a cyanide-resistant branch of the aerobic respiratory chain. Contributes to suppression of black root rot of tobacco. This chain is Hydrogen cyanide synthase subunit HcnC, found in Pseudomonas protegens (strain DSM 19095 / LMG 27888 / CFBP 6595 / CHA0).